Consider the following 454-residue polypeptide: uncharacterized protein (454 aa).

ATP is bound at residue 125 to 132 (GDVGCGKT).

Belongs to the AFG1 ATPase family.

This is an uncharacterized protein from Schizosaccharomyces pombe (strain 972 / ATCC 24843) (Fission yeast).